The following is a 152-amino-acid chain: Transcriptional regulator MraZ (152 aa).

SpoVT-AbrB domains lie at 5–52 (ASAI…PIHE) and 81–124 (AHEC…DEAA).

It belongs to the MraZ family. Forms oligomers.

It localises to the cytoplasm. It is found in the nucleoid. The sequence is that of Transcriptional regulator MraZ from Shewanella pealeana (strain ATCC 700345 / ANG-SQ1).